We begin with the raw amino-acid sequence, 163 residues long: NADH-quinone oxidoreductase subunit I (163 aa).

4Fe-4S ferredoxin-type domains lie at 54–84 and 94–123; these read LRRYPNGEERCIACKLCEAVCPANAITIESE and IVYDIDLFKCIFCGFCEEACPVDAIVETQI. Positions 64, 67, 70, 74, 103, 106, 109, and 113 each coordinate [4Fe-4S] cluster.

This sequence belongs to the complex I 23 kDa subunit family. NDH-1 is composed of 14 different subunits. Subunits NuoA, H, J, K, L, M, N constitute the membrane sector of the complex. Requires [4Fe-4S] cluster as cofactor.

It localises to the cell inner membrane. It catalyses the reaction a quinone + NADH + 5 H(+)(in) = a quinol + NAD(+) + 4 H(+)(out). NDH-1 shuttles electrons from NADH, via FMN and iron-sulfur (Fe-S) centers, to quinones in the respiratory chain. The immediate electron acceptor for the enzyme in this species is believed to be ubiquinone. Couples the redox reaction to proton translocation (for every two electrons transferred, four hydrogen ions are translocated across the cytoplasmic membrane), and thus conserves the redox energy in a proton gradient. This chain is NADH-quinone oxidoreductase subunit I, found in Ruthia magnifica subsp. Calyptogena magnifica.